A 109-amino-acid polypeptide reads, in one-letter code: Thiosulfate sulfurtransferase GlpE (109 aa).

The Rhodanese domain occupies 16–104 (REQGAVVVDV…WRTTFPSETA (89 aa)). Cys-64 functions as the Cysteine persulfide intermediate in the catalytic mechanism.

This sequence belongs to the GlpE family.

Its subcellular location is the cytoplasm. The catalysed reaction is thiosulfate + hydrogen cyanide = thiocyanate + sulfite + 2 H(+). It catalyses the reaction thiosulfate + [thioredoxin]-dithiol = [thioredoxin]-disulfide + hydrogen sulfide + sulfite + 2 H(+). Its function is as follows. Transferase that catalyzes the transfer of sulfur from thiosulfate to thiophilic acceptors such as cyanide or dithiols. May function in a CysM-independent thiosulfate assimilation pathway by catalyzing the conversion of thiosulfate to sulfite, which can then be used for L-cysteine biosynthesis. This Pseudomonas fluorescens (strain Pf0-1) protein is Thiosulfate sulfurtransferase GlpE.